The chain runs to 980 residues: Peroxisomal ATPase PEX6 (980 aa).

An Omega-N-methylarginine modification is found at arginine 119. Residues glycine 470 to threonine 477 and glycine 744 to threonine 751 contribute to the ATP site.

The protein belongs to the AAA ATPase family. As to quaternary structure, interacts with PEX1; forming the PEX1-PEX6 AAA ATPase complex, which is composed of a heterohexamer formed by a trimer of PEX1-PEX6 dimers. Interacts with PEX26; interaction is direct and promotes recruitment to peroxisomal membranes. Interacts with ZFAND6. Expressed in the retina, at higher levels in the photoreceptor layer at the joint between the outer and inner segments.

The protein localises to the cytoplasm. It localises to the cytosol. Its subcellular location is the peroxisome membrane. The protein resides in the cell projection. It is found in the cilium. The protein localises to the photoreceptor outer segment. It catalyses the reaction ATP + H2O = ADP + phosphate + H(+). Its function is as follows. Component of the PEX1-PEX6 AAA ATPase complex, a protein dislocase complex that mediates the ATP-dependent extraction of the PEX5 receptor from peroxisomal membranes, an essential step for PEX5 recycling. Specifically recognizes PEX5 monoubiquitinated at 'Cys-11', and pulls it out of the peroxisome lumen through the PEX2-PEX10-PEX12 retrotranslocation channel. Extraction by the PEX1-PEX6 AAA ATPase complex is accompanied by unfolding of the TPR repeats and release of bound cargo from PEX5. In Homo sapiens (Human), this protein is Peroxisomal ATPase PEX6.